The sequence spans 616 residues: Chaperone protein HscA (616 aa).

It belongs to the heat shock protein 70 family.

In terms of biological role, chaperone involved in the maturation of iron-sulfur cluster-containing proteins. Has a low intrinsic ATPase activity which is markedly stimulated by HscB. Involved in the maturation of IscU. This Salmonella arizonae (strain ATCC BAA-731 / CDC346-86 / RSK2980) protein is Chaperone protein HscA.